Here is a 261-residue protein sequence, read N- to C-terminus: Pimeloyl-[acyl-carrier protein] methyl ester esterase (261 aa).

Residues 16–241 (LVLLHGWGLN…HAAHAPFISH (226 aa)) form the AB hydrolase-1 domain. Residues tryptophan 22, 82 to 83 (SL), and 143 to 147 (FLALQ) each bind substrate. The active-site Nucleophile is the serine 82. Catalysis depends on residues aspartate 207 and histidine 235. Histidine 235 contributes to the substrate binding site.

The protein belongs to the AB hydrolase superfamily. Carboxylesterase BioH family. Monomer.

The protein resides in the cytoplasm. The catalysed reaction is 6-carboxyhexanoyl-[ACP] methyl ester + H2O = 6-carboxyhexanoyl-[ACP] + methanol + H(+). It participates in cofactor biosynthesis; biotin biosynthesis. The physiological role of BioH is to remove the methyl group introduced by BioC when the pimeloyl moiety is complete. It allows to synthesize pimeloyl-ACP via the fatty acid synthetic pathway through the hydrolysis of the ester bonds of pimeloyl-ACP esters. This chain is Pimeloyl-[acyl-carrier protein] methyl ester esterase, found in Photorhabdus laumondii subsp. laumondii (strain DSM 15139 / CIP 105565 / TT01) (Photorhabdus luminescens subsp. laumondii).